A 391-amino-acid polypeptide reads, in one-letter code: UDP-N-acetylglucosamine--N-acetylmuramyl-(pentapeptide) pyrophosphoryl-undecaprenol N-acetylglucosamine transferase (391 aa).

Residues 11–13, Arg-176, Ser-206, and Gln-312 each bind UDP-N-acetyl-alpha-D-glucosamine; that span reads TGG.

Belongs to the glycosyltransferase 28 family. MurG subfamily.

It localises to the cell inner membrane. It catalyses the reaction di-trans,octa-cis-undecaprenyl diphospho-N-acetyl-alpha-D-muramoyl-L-alanyl-D-glutamyl-meso-2,6-diaminopimeloyl-D-alanyl-D-alanine + UDP-N-acetyl-alpha-D-glucosamine = di-trans,octa-cis-undecaprenyl diphospho-[N-acetyl-alpha-D-glucosaminyl-(1-&gt;4)]-N-acetyl-alpha-D-muramoyl-L-alanyl-D-glutamyl-meso-2,6-diaminopimeloyl-D-alanyl-D-alanine + UDP + H(+). It participates in cell wall biogenesis; peptidoglycan biosynthesis. Cell wall formation. Catalyzes the transfer of a GlcNAc subunit on undecaprenyl-pyrophosphoryl-MurNAc-pentapeptide (lipid intermediate I) to form undecaprenyl-pyrophosphoryl-MurNAc-(pentapeptide)GlcNAc (lipid intermediate II). In Treponema denticola (strain ATCC 35405 / DSM 14222 / CIP 103919 / JCM 8153 / KCTC 15104), this protein is UDP-N-acetylglucosamine--N-acetylmuramyl-(pentapeptide) pyrophosphoryl-undecaprenol N-acetylglucosamine transferase.